A 486-amino-acid chain; its full sequence is Differentially expressed in FDCP 8 homolog (486 aa).

Positions 1–26 (MSSWCSSEDAHNQSSTPSTRSRKSSW) are disordered. 2 Phorbol-ester/DAG-type zinc fingers span residues 160–212 (GHEF…KRVC) and 393–459 (IHTV…SLNC).

It belongs to the DEF8 family.

The polypeptide is Differentially expressed in FDCP 8 homolog (Caenorhabditis elegans).